Here is a 353-residue protein sequence, read N- to C-terminus: Putative glycosyltransferase TagX (353 aa).

Belongs to the glycosyltransferase 2 family.

This chain is Putative glycosyltransferase TagX (tagX), found in Staphylococcus aureus (strain MRSA252).